The sequence spans 453 residues: Chromosomal replication initiator protein DnaA (453 aa).

Residues 1–74 (MKEKQFWNRI…GFEIYDAEIT (74 aa)) are domain I, interacts with DnaA modulators. The segment at 74–113 (TPHYIFTKPQDTTSSQVEEATNLTLYDYSPKLVSIPYSDT) is domain II. Residues 114-331 (GLKEKYTFDN…GAINDITLIA (218 aa)) are domain III, AAA+ region. ATP contacts are provided by G158, G160, K161, and T162. The domain IV, binds dsDNA stretch occupies residues 332 to 453 (RVKKIKDITI…EIESIKKKIK (122 aa)).

The protein belongs to the DnaA family. Oligomerizes as a right-handed, spiral filament on DNA at oriC.

The protein resides in the cytoplasm. Its function is as follows. Plays an essential role in the initiation and regulation of chromosomal replication. ATP-DnaA binds to the origin of replication (oriC) to initiate formation of the DNA replication initiation complex once per cell cycle. Binds the DnaA box (a 9 base pair repeat at the origin) and separates the double-stranded (ds)DNA. Forms a right-handed helical filament on oriC DNA; dsDNA binds to the exterior of the filament while single-stranded (ss)DNA is stabiized in the filament's interior. The ATP-DnaA-oriC complex binds and stabilizes one strand of the AT-rich DNA unwinding element (DUE), permitting loading of DNA polymerase. After initiation quickly degrades to an ADP-DnaA complex that is not apt for DNA replication. Binds acidic phospholipids. This is Chromosomal replication initiator protein DnaA from Streptococcus pneumoniae (strain P1031).